The following is a 925-amino-acid chain: Isoleucine--tRNA ligase (925 aa).

The 'HIGH' region motif lies at 57 to 67; that stretch reads PYANGDIHMGH. E556 provides a ligand contact to L-isoleucyl-5'-AMP. Residues 597 to 601 carry the 'KMSKS' region motif; that stretch reads KMSKS. K600 provides a ligand contact to ATP. 4 residues coordinate Zn(2+): C890, C893, C910, and C913.

Belongs to the class-I aminoacyl-tRNA synthetase family. IleS type 1 subfamily. Monomer. The cofactor is Zn(2+).

It localises to the cytoplasm. It carries out the reaction tRNA(Ile) + L-isoleucine + ATP = L-isoleucyl-tRNA(Ile) + AMP + diphosphate. In terms of biological role, catalyzes the attachment of isoleucine to tRNA(Ile). As IleRS can inadvertently accommodate and process structurally similar amino acids such as valine, to avoid such errors it has two additional distinct tRNA(Ile)-dependent editing activities. One activity is designated as 'pretransfer' editing and involves the hydrolysis of activated Val-AMP. The other activity is designated 'posttransfer' editing and involves deacylation of mischarged Val-tRNA(Ile). The sequence is that of Isoleucine--tRNA ligase from Carboxydothermus hydrogenoformans (strain ATCC BAA-161 / DSM 6008 / Z-2901).